The primary structure comprises 185 residues: Elongation factor P (185 aa).

It belongs to the elongation factor P family.

Its subcellular location is the cytoplasm. The protein operates within protein biosynthesis; polypeptide chain elongation. Functionally, involved in peptide bond synthesis. Stimulates efficient translation and peptide-bond synthesis on native or reconstituted 70S ribosomes in vitro. Probably functions indirectly by altering the affinity of the ribosome for aminoacyl-tRNA, thus increasing their reactivity as acceptors for peptidyl transferase. This Trichodesmium erythraeum (strain IMS101) protein is Elongation factor P.